The chain runs to 298 residues: MKDFISIRDFDRAAIDRLIAEAERIDHHQYDPLEMKGKILALLFFEPSTRTRMSFEAAMARLGGTSLTLSSFEASSMAKGETLADTIRVVSGYVDAIVLRHPREGAARLASEVSSVPVINAGDGAGQHPSQTLLDLYTIRQSMPIDGINIGLLGDLRYGRTTHSLTYALSLYDAVIHTVAPAGLNLPSGLVHELRELGTEVIEHEQIEDVIKELDVLYVTRIQRERFPDTASYFNVASSYRITPELLRGTKEHMVVLHPLPRVDEIDPRVDKMKNARYFEQSHNGVPVRMAMLKQVIA.

Residues Arg50 and Thr51 each coordinate carbamoyl phosphate. Lys79 contacts L-aspartate. Arg100, His128, and Gln131 together coordinate carbamoyl phosphate. L-aspartate-binding residues include Arg160 and Arg221. Residues Leu260 and Pro261 each coordinate carbamoyl phosphate.

Belongs to the aspartate/ornithine carbamoyltransferase superfamily. ATCase family. Heterooligomer of catalytic and regulatory chains.

It carries out the reaction carbamoyl phosphate + L-aspartate = N-carbamoyl-L-aspartate + phosphate + H(+). Its pathway is pyrimidine metabolism; UMP biosynthesis via de novo pathway; (S)-dihydroorotate from bicarbonate: step 2/3. Its function is as follows. Catalyzes the condensation of carbamoyl phosphate and aspartate to form carbamoyl aspartate and inorganic phosphate, the committed step in the de novo pyrimidine nucleotide biosynthesis pathway. This is Aspartate carbamoyltransferase catalytic subunit from Methanosphaerula palustris (strain ATCC BAA-1556 / DSM 19958 / E1-9c).